Here is a 445-residue protein sequence, read N- to C-terminus: 3-phosphoshikimate 1-carboxyvinyltransferase (445 aa).

The tract at residues 1-25 (MSGHGPAQPMTARRSGPLKGRAEIP) is disordered. 3-phosphoshikimate is bound by residues lysine 28, serine 29, and arginine 33. Lysine 28 serves as a coordination point for phosphoenolpyruvate. Positions 101 and 129 each coordinate phosphoenolpyruvate. Residues serine 174, glutamine 176, aspartate 326, and lysine 353 each contribute to the 3-phosphoshikimate site. Residue glutamine 176 coordinates phosphoenolpyruvate. Aspartate 326 serves as the catalytic Proton acceptor. Arginine 357 and arginine 400 together coordinate phosphoenolpyruvate.

This sequence belongs to the EPSP synthase family. Monomer.

It localises to the cytoplasm. It catalyses the reaction 3-phosphoshikimate + phosphoenolpyruvate = 5-O-(1-carboxyvinyl)-3-phosphoshikimate + phosphate. It participates in metabolic intermediate biosynthesis; chorismate biosynthesis; chorismate from D-erythrose 4-phosphate and phosphoenolpyruvate: step 6/7. Catalyzes the transfer of the enolpyruvyl moiety of phosphoenolpyruvate (PEP) to the 5-hydroxyl of shikimate-3-phosphate (S3P) to produce enolpyruvyl shikimate-3-phosphate and inorganic phosphate. The polypeptide is 3-phosphoshikimate 1-carboxyvinyltransferase (Cereibacter sphaeroides (strain ATCC 17029 / ATH 2.4.9) (Rhodobacter sphaeroides)).